We begin with the raw amino-acid sequence, 286 residues long: Prepilin leader peptidase/N-methyltransferase (286 aa).

Residues 11-31 form a helical membrane-spanning segment; sequence LGIFFVGLFSLMVGSFLNVVI. Residues Cys-74, Cys-77, Cys-99, and Cys-102 each coordinate Zn(2+). The next 6 membrane-spanning stretches (helical) occupy residues 106 to 126, 132 to 152, 161 to 181, 185 to 205, 231 to 251, and 257 to 277; these read ISAR…IVAF, LSLG…FIDA, LTLP…FINL, VIGA…FKLI, LPII…GIGL, and MPFG…GAQI.

The protein belongs to the peptidase A24 family. The cofactor is Zn(2+).

Its subcellular location is the cell inner membrane. It carries out the reaction Typically cleaves a -Gly-|-Phe- bond to release an N-terminal, basic peptide of 5-8 residues from type IV prepilin, and then N-methylates the new N-terminal amino group, the methyl donor being S-adenosyl-L-methionine.. Its function is as follows. Plays an essential role in type IV pili and type II pseudopili formation by proteolytically removing the leader sequence from substrate proteins and subsequently monomethylating the alpha-amino group of the newly exposed N-terminal phenylalanine. The sequence is that of Prepilin leader peptidase/N-methyltransferase (fimP) from Dichelobacter nodosus (Bacteroides nodosus).